A 177-amino-acid chain; its full sequence is R-phycoerythrin beta chain (177 aa).

(2R,3E)-phycoerythrobilin contacts are provided by Asn-35 and Asp-39. Phycourobilin-binding residues include Cys-50, Asp-54, and Cys-61. (2R,3E)-phycoerythrobilin is bound by residues Asn-72, 77–78 (RR), Cys-82, and 84–85 (RD). Asn-72 bears the N4-methylasparagine mark. Phycourobilin is bound at residue 147 to 148 (SG). Cys-158 provides a ligand contact to (2R,3E)-phycoerythrobilin.

The protein belongs to the phycobiliprotein family. As to quaternary structure, heterododecamer of 6 alpha and 6 beta chains. The basic functional unit of phycobiliproteins is a ring-shaped hexamer formed from two back-to-back trimers contacting via the alpha chain subunits. The trimers are composed of alpha/beta subunit heterodimers arranged around a three-fold axis of symmetry. The phycoerythrins also contain a gamma subunit which is located in the center of the hexamer. In terms of processing, contains two covalently linked phycoerythrobilin chromophores and one covalently linked phycourobilin chromophore.

Its subcellular location is the plastid. The protein resides in the chloroplast thylakoid membrane. Its function is as follows. Light-harvesting photosynthetic tetrapyrrole chromophore-protein from the phycobiliprotein complex. The polypeptide is R-phycoerythrin beta chain (cpeB) (Griffithsia monilis (Red alga)).